We begin with the raw amino-acid sequence, 87 residues long: Putative sodium channel toxin Ts38 (87 aa).

Residues 1–22 form the signal peptide; that stretch reads MKHLKFYSILFLFSIFVYKVNA. 3 cysteine pairs are disulfide-bonded: cysteine 42-cysteine 65, cysteine 51-cysteine 72, and cysteine 55-cysteine 74.

This sequence belongs to the long (3 C-C) scorpion toxin superfamily. Sodium channel inhibitor family. In terms of tissue distribution, expressed by the venom gland.

The protein localises to the secreted. In terms of biological role, putative sodium channel toxin. The polypeptide is Putative sodium channel toxin Ts38 (Tityus serrulatus (Brazilian scorpion)).